The primary structure comprises 209 residues: Rac-like GTP-binding protein ARAC9 (209 aa).

25–32 (GDGAVGKT) is a binding site for GTP. An Effector region motif is present at residues 47–55 (YVPTVFDNF). GTP is bound by residues 72-76 (DTAGQ) and 130-133 (TKSD). Cys206 bears the Cysteine methyl ester mark. The S-geranylgeranyl cysteine moiety is linked to residue Cys206. Positions 207-209 (HVL) are cleaved as a propeptide — removed in mature form.

The protein belongs to the small GTPase superfamily. Rho family. Interacts with SPK1.

It is found in the cytoplasm. It localises to the membrane. Functionally, inactive GDP-bound Rho GTPases reside in the cytosol, are found in a complex with Rho GDP-dissociation inhibitors (Rho GDIs), and are released from the GDI protein in order to translocate to membranes upon activation. The sequence is that of Rac-like GTP-binding protein ARAC9 (ARAC9) from Arabidopsis thaliana (Mouse-ear cress).